Consider the following 222-residue polypeptide: 2-C-methyl-D-erythritol 2,4-cyclodiphosphate synthase, chloroplastic (222 aa).

The transit peptide at 1–43 (MATASSLFLASPVATAPTARARSTPSASPARPSLRLRRPSTLA) directs the protein to the chloroplast. The a divalent metal cation site is built by Asp-73 and His-75. Residues 73 to 75 (DLH), 99 to 100 (HS), 103 to 111 (DVLLHCVVD), 121 to 123 (DIG), 126 to 130 (FPDSD), Asp-130, 165 to 171 (LQKPKIS), and 196 to 200 (AKTHE) contribute to the substrate site. His-107 is a binding site for a divalent metal cation.

It belongs to the IspF family. Homotrimer. The cofactor is a divalent metal cation. Expressed in roots, leaves, stems, leaf sheaths and young panicles.

The protein localises to the plastid. It localises to the chloroplast. The enzyme catalyses 4-CDP-2-C-methyl-D-erythritol 2-phosphate = 2-C-methyl-D-erythritol 2,4-cyclic diphosphate + CMP. It participates in isoprenoid biosynthesis; isopentenyl diphosphate biosynthesis via DXP pathway; isopentenyl diphosphate from 1-deoxy-D-xylulose 5-phosphate: step 4/6. In terms of biological role, enzyme of the plastid non-mevalonate pathway for isoprenoid biosynthesis that converts 4-diphosphocytidyl-2C-methyl-D-erythritol 2-phosphate into 2C-methyl-D-erythritol 2,4-cyclodiphosphate and CMP. Is essential for chloroplast development. This chain is 2-C-methyl-D-erythritol 2,4-cyclodiphosphate synthase, chloroplastic, found in Oryza sativa subsp. japonica (Rice).